A 150-amino-acid chain; its full sequence is Small ribosomal subunit protein uS7cz/uS7cy (150 aa).

The protein belongs to the universal ribosomal protein uS7 family. Part of the 30S ribosomal subunit.

Its subcellular location is the plastid. The protein resides in the chloroplast. One of the primary rRNA binding proteins, it binds directly to 16S rRNA where it nucleates assembly of the head domain of the 30S subunit. In Adiantum capillus-veneris (Maidenhair fern), this protein is Small ribosomal subunit protein uS7cz/uS7cy (rps7-A).